Reading from the N-terminus, the 285-residue chain is Casein kinase II subunit beta-2 (285 aa).

Residues 226-285 are disordered; that stretch reads FKDAEDEAELDDDDEEEEEEEEEEEELAAMDEAEGAQQQHAAAAAGTATGGVAAGGEGVH. Over residues 229–259 the composition is skewed to acidic residues; sequence AEDEAELDDDDEEEEEEEEEEEELAAMDEAE. Low complexity predominate over residues 260–272; sequence GAQQQHAAAAAGT. The span at 273-285 shows a compositional bias: gly residues; it reads ATGGVAAGGEGVH.

Belongs to the casein kinase 2 subunit beta family. Tetramer composed of two alpha chains, one beta chain and one beta' chain. Post-translationally, phosphorylated by alpha subunit.

Regulatory subunit of casein kinase II/CK2. As part of the kinase complex regulates the basal catalytic activity of the alpha subunit a constitutively active serine/threonine-protein kinase that phosphorylates a large number of substrates containing acidic residues C-terminal to the phosphorylated serine or threonine. This is Casein kinase II subunit beta-2 (ckb-2) from Neurospora crassa (strain ATCC 24698 / 74-OR23-1A / CBS 708.71 / DSM 1257 / FGSC 987).